Reading from the N-terminus, the 277-residue chain is Non-structural protein 2a (277 aa).

This sequence belongs to the coronaviruses ns2a protein family.

This Bovine coronavirus (strain Quebec) (BCoV) protein is Non-structural protein 2a.